We begin with the raw amino-acid sequence, 263 residues long: Tryptophan synthase alpha chain (263 aa).

Active-site proton acceptor residues include glutamate 46 and aspartate 57.

Belongs to the TrpA family. Tetramer of two alpha and two beta chains.

The catalysed reaction is (1S,2R)-1-C-(indol-3-yl)glycerol 3-phosphate + L-serine = D-glyceraldehyde 3-phosphate + L-tryptophan + H2O. It functions in the pathway amino-acid biosynthesis; L-tryptophan biosynthesis; L-tryptophan from chorismate: step 5/5. The alpha subunit is responsible for the aldol cleavage of indoleglycerol phosphate to indole and glyceraldehyde 3-phosphate. This chain is Tryptophan synthase alpha chain, found in Bacteroides fragilis (strain ATCC 25285 / DSM 2151 / CCUG 4856 / JCM 11019 / LMG 10263 / NCTC 9343 / Onslow / VPI 2553 / EN-2).